Reading from the N-terminus, the 241-residue chain is Large ribosomal subunit protein eL32 (241 aa).

The span at 1–16 shows a compositional bias: acidic residues; the sequence is MADNEEDVEAEEEYTE. 2 disordered regions span residues 1–47 and 68–182; these read MADN…GADQ and VGGL…HPSG. Basic and acidic residues predominate over residues 29–44; the sequence is ESLREAGFESVEDVRG. Residues 73–96 show a composition bias toward acidic residues; sequence VESETEAEVEEEGGEEAPDEDVET. Positions 103-116 are enriched in basic and acidic residues; that stretch reads LTEKTPDLSDEDAR. Basic residues predominate over residues 133 to 159; the sequence is DHHKKKRVSTSWRKPRGQLSKQRRGIK.

Belongs to the eukaryotic ribosomal protein eL32 family. In terms of assembly, part of the 50S ribosomal subunit. Interacts weakly with protein L15.

Binds to the 23S rRNA. In Haloarcula marismortui (strain ATCC 43049 / DSM 3752 / JCM 8966 / VKM B-1809) (Halobacterium marismortui), this protein is Large ribosomal subunit protein eL32 (rpl32e).